A 554-amino-acid chain; its full sequence is CTP synthase (554 aa).

Residues 1 to 265 (MTPLIFVTGG…DELVIEQFKL (265 aa)) form an amidoligase domain region. Ser13 provides a ligand contact to CTP. Ser13 serves as a coordination point for UTP. Residues 14 to 19 (SLGKGI) and Asp71 contribute to the ATP site. Residues Asp71 and Glu139 each coordinate Mg(2+). Residues 146-148 (DIE), 186-191 (KTKPTQ), and Lys222 contribute to the CTP site. UTP is bound by residues 186–191 (KTKPTQ) and Lys222. Residues 292–545 (NIAVVGKYVD…VRAAREKKAG (254 aa)) form the Glutamine amidotransferase type-1 domain. L-glutamine is bound at residue Gly353. The Nucleophile; for glutamine hydrolysis role is filled by Cys380. Residues 381–384 (YGMQ), Glu404, and Arg471 each bind L-glutamine. Active-site residues include His518 and Glu520.

It belongs to the CTP synthase family. Homotetramer.

The enzyme catalyses UTP + L-glutamine + ATP + H2O = CTP + L-glutamate + ADP + phosphate + 2 H(+). It carries out the reaction L-glutamine + H2O = L-glutamate + NH4(+). It catalyses the reaction UTP + NH4(+) + ATP = CTP + ADP + phosphate + 2 H(+). Its pathway is pyrimidine metabolism; CTP biosynthesis via de novo pathway; CTP from UDP: step 2/2. Allosterically activated by GTP, when glutamine is the substrate; GTP has no effect on the reaction when ammonia is the substrate. The allosteric effector GTP functions by stabilizing the protein conformation that binds the tetrahedral intermediate(s) formed during glutamine hydrolysis. Inhibited by the product CTP, via allosteric rather than competitive inhibition. In terms of biological role, catalyzes the ATP-dependent amination of UTP to CTP with either L-glutamine or ammonia as the source of nitrogen. Regulates intracellular CTP levels through interactions with the four ribonucleotide triphosphates. This Xanthomonas euvesicatoria pv. vesicatoria (strain 85-10) (Xanthomonas campestris pv. vesicatoria) protein is CTP synthase.